We begin with the raw amino-acid sequence, 555 residues long: Sulfite reductase [ferredoxin] (555 aa).

The interval 1 to 22 (MTTARPAKARNEGQWALGHREP) is disordered. Positions 69–161 (YTQREQGYDG…DVGLQTTEAC (93 aa)) form a cross-link, 3'-(S-cysteinyl)-tyrosine (Tyr-Cys). Cysteine 417, cysteine 423, cysteine 463, and cysteine 467 together coordinate [4Fe-4S] cluster. Cysteine 467 lines the siroheme pocket.

Belongs to the nitrite and sulfite reductase 4Fe-4S domain family. Monomer. Siroheme is required as a cofactor. Requires [4Fe-4S] cluster as cofactor.

It catalyses the reaction hydrogen sulfide + 6 oxidized [2Fe-2S]-[ferredoxin] + 3 H2O = sulfite + 6 reduced [2Fe-2S]-[ferredoxin] + 7 H(+). Catalyzes the reduction of sulfite to sulfide, a step in the biosynthesis of sulfur-containing amino acids and cofactors. In Mycobacterium bovis (strain ATCC BAA-935 / AF2122/97), this protein is Sulfite reductase [ferredoxin] (sir).